The chain runs to 1594 residues: THO complex subunit 2 (1594 aa).

The tract at residues 1–163 (MAAAAVVVPA…KLFYKQQKFN (163 aa)) is anchor domain; interaction with THOC5 and THOC7. The segment at 164–534 (LLREENEGYA…GQWKNETYNG (371 aa)) is bow domain; interaction with THOC1 dock domain and THOC3. The MIF4G domain; interaction with THOC3 and DDX39B stretch occupies residues 535–686 (HPLLVKVKAQ…LILKEVVQKM (152 aa)). A stern domain region spans residues 687-1174 (AGIEITEEMT…LAMGYSGQLK (488 aa)). Residues 896–965 (HTSYEREVNK…LKLEKDNWLL (70 aa)) adopt a coiled-coil conformation. A Nuclear localization signal motif is present at residues 923-928 (KKKKEK). A charged domain region spans residues 1175–1594 (SRKSHMIPEN…KHHKSSDKHR (420 aa)). Composition is skewed to basic and acidic residues over residues 1183–1192 (ENEFHHKDPP) and 1218–1234 (KSDE…RERS). Residues 1183–1594 (ENEFHHKDPP…KHHKSSDKHR (412 aa)) are disordered. A Phosphoserine modification is found at Ser-1222. Low complexity predominate over residues 1251-1264 (GNSSNGNSGSNSNK). Composition is skewed to basic and acidic residues over residues 1265 to 1285 (AVKE…KEKT), 1294 to 1343 (ALGK…EKFK), and 1353 to 1383 (STQE…KGGE). Residue Thr-1385 is modified to Phosphothreonine. Ser-1390, Ser-1393, Ser-1417, Ser-1450, Ser-1486, and Ser-1516 each carry phosphoserine. The segment covering 1416 to 1425 (PSPSHSSTVK) has biased composition (polar residues). A compositionally biased stretch (basic and acidic residues) spans 1449–1504 (KSKEREMDKKDLDKSRERSREREKKDEKDRKERKRDHSNNDREVPPDITKRRKEEN). Positions 1464-1491 (RERSREREKKDEKDRKERKRDHSNNDRE) form a coiled coil. Over residues 1524–1583 (NEKDKEKNKSKSSGKEKSSSDSFKSEKMDKISSGGKKESRHDKEKIEKKEKRDSSGGKEE) the composition is skewed to basic and acidic residues. Over residues 1584–1594 (KKHHKSSDKHR) the composition is skewed to basic residues.

This sequence belongs to the THOC2 family. Component of the THO subcomplex, which is composed of THOC1, THOC2, THOC3, THOC5, THOC6 and THOC7. The THO subcomplex interacts with DDX39B to form the THO-DDX39B complex which multimerizes into a 28-subunit tetrameric assembly. Component of the transcription/export (TREX) complex at least composed of ALYREF/THOC4, DDX39B, SARNP/CIP29, CHTOP and the THO subcomplex; in the complex interacts with THOC1, THOC3, THOC5, THOC7 and DDX39B. TREX seems to have a dynamic structure involving ATP-dependent remodeling. Interacts with POLDIP3. Interacts with ZC3H11A. In terms of tissue distribution, expressed in the hippocampus and the cortical neurons.

Its subcellular location is the nucleus. It is found in the nucleus speckle. It localises to the cytoplasm. Its function is as follows. Component of the THO subcomplex of the TREX complex which is thought to couple mRNA transcription, processing and nuclear export, and which specifically associates with spliced mRNA and not with unspliced pre-mRNA. Required for efficient export of polyadenylated RNA and spliced mRNA. The THOC1-THOC2-THOC3 core complex alone is sufficient to bind export factor NXF1-NXT1 and promote ATPase activity of DDX39B; in the complex THOC2 is the only component that directly interacts with DDX39B. TREX is recruited to spliced mRNAs by a transcription-independent mechanism, binds to mRNA upstream of the exon-junction complex (EJC) and is recruited in a splicing- and cap-dependent manner to a region near the 5' end of the mRNA where it functions in mRNA export to the cytoplasm via the TAP/NXF1 pathway. Required for NXF1 localization to the nuclear rim. THOC2 (and probably the THO complex) is involved in releasing mRNA from nuclear speckle domains. Plays a role for proper neuronal development. The protein is THO complex subunit 2 (Thoc2) of Mus musculus (Mouse).